Consider the following 844-residue polypeptide: Serrate RNA effector molecule homolog B (844 aa).

Disordered regions lie at residues 1 to 90 (MADS…HGSD), 277 to 401 (EAAK…PRPL), 555 to 575 (ELLSSAGRTPETEAPKEGNPT), and 794 to 825 (PNPYGAGRGNYDSFRGQGMYPGKPRNRMMRGD). Composition is skewed to basic and acidic residues over residues 16–73 (FRRE…RHDI) and 277–337 (EAAK…ETRK). Residues 349-359 (SDDGSDSESDT) are compositionally biased toward acidic residues. Over residues 376 to 397 (DTPKKEEETEKPKEKPKEDTVK) the composition is skewed to basic and acidic residues.

This sequence belongs to the ARS2 family. As to quaternary structure, interacts ncbp1/cbp80.

It localises to the nucleus. Its subcellular location is the nucleoplasm. The protein resides in the cytoplasm. Acts as a mediator between the cap-binding complex (CBC) and the primary microRNAs (miRNAs) processing machinery during cell proliferation. Contributes to the stability and delivery of capped primary miRNA transcripts to the primary miRNA processing complex, thereby playing a role in RNA-mediated gene silencing (RNAi) by miRNAs. This chain is Serrate RNA effector molecule homolog B (srrt-b), found in Xenopus laevis (African clawed frog).